The sequence spans 100 residues: Small ribosomal subunit protein uS14c (100 aa).

It belongs to the universal ribosomal protein uS14 family. In terms of assembly, part of the 30S ribosomal subunit.

The protein localises to the plastid. It is found in the chloroplast. Functionally, binds 16S rRNA, required for the assembly of 30S particles. In Pyropia yezoensis (Susabi-nori), this protein is Small ribosomal subunit protein uS14c.